Here is a 330-residue protein sequence, read N- to C-terminus: MRVFIDKLKDKQDLSFAESKNAFEILMNGKASDDEIFDFLTLLSSKGESSDEIAGGVFVLRDKSKRVNVDDCIDTCGTGGDGMNTLNISTASALLLSSMGIKVAKHGNKAVSSKCGSGDVLEALNIKIDLEPKDIEEQIKKNNFGFMFAPNYHSAMRFVGPTRKKIGKRTIFNMIGPLSSPALVDRQVIGVFDKKLLKIFANALNNLDIKFAWIVNSEDGLDEISPYSKTNVVQLKDGKISEMLIDPIKLNIGANKFENLLGDDAKFNANKMLDIFKGEDNDFSKAVCLNAAAGLIVSEKYTIFIDAYNEARTHILSGKTYNDLKEIQNV.

5-phospho-alpha-D-ribose 1-diphosphate is bound by residues G77, 80–81 (GD), T85, 87–90 (NIST), 105–113 (KHGNKAVSS), and S117. G77 provides a ligand contact to anthranilate. Mg(2+) is bound at residue S89. N108 contacts anthranilate. R163 provides a ligand contact to anthranilate. 2 residues coordinate Mg(2+): D222 and E223.

The protein belongs to the anthranilate phosphoribosyltransferase family. In terms of assembly, homodimer. Mg(2+) is required as a cofactor.

The catalysed reaction is N-(5-phospho-beta-D-ribosyl)anthranilate + diphosphate = 5-phospho-alpha-D-ribose 1-diphosphate + anthranilate. It participates in amino-acid biosynthesis; L-tryptophan biosynthesis; L-tryptophan from chorismate: step 2/5. In terms of biological role, catalyzes the transfer of the phosphoribosyl group of 5-phosphorylribose-1-pyrophosphate (PRPP) to anthranilate to yield N-(5'-phosphoribosyl)-anthranilate (PRA). This Pelagibacter ubique (strain HTCC1062) protein is Anthranilate phosphoribosyltransferase.